We begin with the raw amino-acid sequence, 713 residues long: Topoisomerase subunit TopoM (713 aa).

The 464-residue stretch at I41 to E504 folds into the Topo IIA-type catalytic domain. The active-site O-(5'-phospho-DNA)-tyrosine intermediate is Y128. The segment at N694–E713 is disordered.

The protein belongs to the type II topoisomerase GyrA/ParC subunit family. In terms of assembly, a complex of TopoN and TopoM, possibly a heterotetramer. Mg(2+) serves as cofactor.

It carries out the reaction ATP-dependent breakage, passage and rejoining of double-stranded DNA.. With respect to regulation, inhibited by quinolone antibiotic ciprofloxacin and coumarin antibiotic novobiocin, but at much higher concentrations than is usual for DNA gyrase/topoisomerase. Catalyzes the relaxation of negatively supercoiled DNA in the presence of ATP or dATP but not other nucleotides. Individual subunits have no activity. Not able to negatively supercoil DNA, it can however introduce positive supercoils in DNA. Relaxes positive supercoils in an ATP-dependent manner. Catenates and decatenates DNA. Generates dsDNA breaks in the presence of the quinolone antibiotic ciprofloxacin, showing it is a topoisomerase. The polypeptide is Topoisomerase subunit TopoM (Mycolicibacterium smegmatis (strain ATCC 700084 / mc(2)155) (Mycobacterium smegmatis)).